We begin with the raw amino-acid sequence, 156 residues long: Small ribosomal subunit protein uS7 (156 aa).

Belongs to the universal ribosomal protein uS7 family. Part of the 30S ribosomal subunit. Contacts proteins S9 and S11.

Its function is as follows. One of the primary rRNA binding proteins, it binds directly to 16S rRNA where it nucleates assembly of the head domain of the 30S subunit. Is located at the subunit interface close to the decoding center, probably blocks exit of the E-site tRNA. This is Small ribosomal subunit protein uS7 from Streptococcus suis (strain 98HAH33).